Consider the following 166-residue polypeptide: uncharacterized protein (166 aa).

Residues 2 to 82 (DNWVCYLIMS…KRLSKKRNIQ (81 aa)) enclose the GIY-YIG domain. The segment at 23-43 (NNRQRRLNDHNNLNPSRKGAK) is disordered.

This is an uncharacterized protein from Acanthamoeba polyphaga mimivirus (APMV).